Consider the following 502-residue polypeptide: MAISLLCLFLITFVSLTIVGCKIKRSIWNLPPSPPKLPVIGNLHQVGELPHRSFRRLAERTGHVMLLHLGFVPVTVISSREAAEEVLRTHDLDCCSRPNLVGSRLISRGFKDLNFTPYGEEWKERRRFLVGELFCSKKLQSFIYIKEVECNFLVKKLSESAVDQSPVDLSKTLFWLAASILFRVAFGQSFHESEFTDTDKIDELVFETETAQGSFTCSDFFPIAGLGWLVDWISGQHKRLNDVFLKLDALLQHVIDDHSNPGRSKDHKDIVDVMLDVMHKQGKDDSLRLTIDHIKGLLTNIIIAGIDTGALTMIWTMTELARNPEIMKKVQGEIRDRLGNNRERITKEDLDKVPFLNLVIKETFRLHPVAPLLLPRETMAHVKVQGYDIPPKRRILVNAWAIGRDPKLWTDPEEFKPERFIDSPVDYRGQHFELLPFGSGRRICPGMAMGMATLELGLLNLLYFFDWKLPDGMSHKDIDTEEAGTLTVVKKVHLKLVPVRVP.

Residues 1–21 (MAISLLCLFLITFVSLTIVGC) traverse the membrane as a helical segment. Residue cysteine 444 participates in heme binding.

The protein belongs to the cytochrome P450 family. The cofactor is heme.

The protein resides in the membrane. The polypeptide is Cytochrome P450 71B17 (CYP71B17) (Arabidopsis thaliana (Mouse-ear cress)).